The following is a 148-amino-acid chain: MADILQMHDLKPAPGANKDRIRVGRGEGSKGKTSGRGDKGTKKRYQVRPGFEGGQLPLYMRLPKLRGFKNPFKKEYQVVNVAVLAELFPQGGEITVADLVAKGAVRNGFPVKVLGDGEVSAAYTLKGVKASASAKSKIEAAGGSISED.

The span at 1–40 shows a compositional bias: basic and acidic residues; sequence MADILQMHDLKPAPGANKDRIRVGRGEGSKGKTSGRGDKG. The disordered stretch occupies residues 1 to 47; the sequence is MADILQMHDLKPAPGANKDRIRVGRGEGSKGKTSGRGDKGTKKRYQV.

It belongs to the universal ribosomal protein uL15 family. Part of the 50S ribosomal subunit.

Binds to the 23S rRNA. This Bifidobacterium adolescentis (strain ATCC 15703 / DSM 20083 / NCTC 11814 / E194a) protein is Large ribosomal subunit protein uL15.